A 459-amino-acid chain; its full sequence is MSQSSASSIFTVSRLNQTVRELLEREMGQIWLTAEISNFSQPASGHWYFTLKDDRAQVRCAMFRNSNRRTTFRPQNGQQVLVRASITLYEPRGDYQLIAESMQPAGDGLLQQQFEQLKQQLAAEGLFDQSHKQPLPHPAKQVGVITSASGAALHDVLHVLQRRDPSLPVIIYPTSVQGVDAPLQIVRAIQLANLRAECDVLIVGRGGGSLEDLWSFNDERVARAIFNSHIPIVSAVGHETDVTIADFVADLRAPTPSAAAELVSRNQIELVRQIQGQQQRMEMAMDYYLAQRNQQFTRLEHRLQQQHPHLRLARQQTLLLKLQRRLEESAQTQIRLLSKRTERLQQRLQQVQPQGQIHRYNQRVQQQEYRLRQAVERQLNGYRQRFGIACSQLEAVSPLATLARGYSVTQTPAGALLKTTKQVQAGDKLTTRLQDGWVESEITQVTVAKKSRQKKVVTQ.

It belongs to the XseA family. In terms of assembly, heterooligomer composed of large and small subunits.

Its subcellular location is the cytoplasm. It catalyses the reaction Exonucleolytic cleavage in either 5'- to 3'- or 3'- to 5'-direction to yield nucleoside 5'-phosphates.. Bidirectionally degrades single-stranded DNA into large acid-insoluble oligonucleotides, which are then degraded further into small acid-soluble oligonucleotides. This is Exodeoxyribonuclease 7 large subunit from Yersinia pestis bv. Antiqua (strain Antiqua).